The chain runs to 213 residues: uncharacterized protein (213 aa).

This is an uncharacterized protein from Bacillus subtilis (strain 168).